A 497-amino-acid chain; its full sequence is Aspartyl/glutamyl-tRNA(Asn/Gln) amidotransferase subunit B (497 aa).

It belongs to the GatB/GatE family. GatB subfamily. In terms of assembly, heterotrimer of A, B and C subunits.

It carries out the reaction L-glutamyl-tRNA(Gln) + L-glutamine + ATP + H2O = L-glutaminyl-tRNA(Gln) + L-glutamate + ADP + phosphate + H(+). The enzyme catalyses L-aspartyl-tRNA(Asn) + L-glutamine + ATP + H2O = L-asparaginyl-tRNA(Asn) + L-glutamate + ADP + phosphate + 2 H(+). Its function is as follows. Allows the formation of correctly charged Asn-tRNA(Asn) or Gln-tRNA(Gln) through the transamidation of misacylated Asp-tRNA(Asn) or Glu-tRNA(Gln) in organisms which lack either or both of asparaginyl-tRNA or glutaminyl-tRNA synthetases. The reaction takes place in the presence of glutamine and ATP through an activated phospho-Asp-tRNA(Asn) or phospho-Glu-tRNA(Gln). This Nocardioides sp. (strain ATCC BAA-499 / JS614) protein is Aspartyl/glutamyl-tRNA(Asn/Gln) amidotransferase subunit B.